Here is a 364-residue protein sequence, read N- to C-terminus: MANKTVLFNKHLESNGKMVDFHGWDMPLNYGSQIEEHHAVRQDAGMFDVSHMTVVDVIGDDACAFLRKLLANDVAKLKVPGKALYGGMLDHNGGVIDDLITYYLSDTQYRIVVNSATREKDLAWINEQVKGFSVEVTERPELAMIAVQGPNAKAKAATVFNDTQNAAVEGMKPFFGVQADSLFIATTGYTGETGYEVIVPEAEAEALWQAFLDAGVKPCGLGARDTLRLEAGMNLYGLDMDESVNPLAANMGWTVAWAPEDRDFNGRKALEKIKAEGADKLVGLIMDAKGVIRHGMSVFFTDSDGVEQQGTITSGTFSPTLGYSIAMARVPNTIGDVAEVEMRKKRVPVKVIAPSFVRNGKQAF.

It belongs to the GcvT family. In terms of assembly, the glycine cleavage system is composed of four proteins: P, T, L and H.

It catalyses the reaction N(6)-[(R)-S(8)-aminomethyldihydrolipoyl]-L-lysyl-[protein] + (6S)-5,6,7,8-tetrahydrofolate = N(6)-[(R)-dihydrolipoyl]-L-lysyl-[protein] + (6R)-5,10-methylene-5,6,7,8-tetrahydrofolate + NH4(+). Functionally, the glycine cleavage system catalyzes the degradation of glycine. The protein is Aminomethyltransferase of Shewanella piezotolerans (strain WP3 / JCM 13877).